Consider the following 184-residue polypeptide: UPF0301 protein Rsph17029_2659 (184 aa).

The protein belongs to the UPF0301 (AlgH) family.

This is UPF0301 protein Rsph17029_2659 from Cereibacter sphaeroides (strain ATCC 17029 / ATH 2.4.9) (Rhodobacter sphaeroides).